Here is a 217-residue protein sequence, read N- to C-terminus: GTP cyclohydrolase 1 (217 aa).

Positions 109, 112, and 180 each coordinate Zn(2+).

This sequence belongs to the GTP cyclohydrolase I family. In terms of assembly, toroid-shaped homodecamer, composed of two pentamers of five dimers.

It carries out the reaction GTP + H2O = 7,8-dihydroneopterin 3'-triphosphate + formate + H(+). It participates in cofactor biosynthesis; 7,8-dihydroneopterin triphosphate biosynthesis; 7,8-dihydroneopterin triphosphate from GTP: step 1/1. The protein is GTP cyclohydrolase 1 of Photobacterium profundum (strain SS9).